A 355-amino-acid chain; its full sequence is MKALVLAGGTGTRLRPITHTSAKQLVPVANKPVLFYGLEAIRAAGIIDVGIVVGDTADEIVAAVGDGSRFGLKVSYIPQSKPLGLAHCVLISRDFLGEDDFIMYLGDNFVVGVVEDSVREFRAARPDAHLMLTRVPEPRSFGVAELSDSGQVLGLEEKPAHPKSDLALVGVYLFSPAIHEAVAAITPSWRGELEITDAVQWLIDAGRDVRSTVISGYWKDTGNVTDMLEVNRLVLETTEPRCDGLVDERSDLIGRVLVEEGAEVRNSRVMGPTVIGAGTRVTNSYVGPFTSLAEDCVVEDSEVEFSIVLRGASISGVRRIEASLIGRHVQVTSAPEVPHANRLVLGDHSRAQISS.

2 residues coordinate Mg(2+): D107 and D220.

It belongs to the glucose-1-phosphate thymidylyltransferase family. Mg(2+) is required as a cofactor.

The catalysed reaction is dTTP + alpha-D-glucose 1-phosphate + H(+) = dTDP-alpha-D-glucose + diphosphate. The protein operates within antibiotic biosynthesis; streptomycin biosynthesis. Involved in the biosynthesis of the streptose moiety of streptomycin. Catalyzes the formation of dTDP-glucose, from dTTP and glucose 1-phosphate, as well as its pyrophosphorolysis. The protein is Glucose-1-phosphate thymidylyltransferase (strD) of Streptomyces griseus.